A 166-amino-acid chain; its full sequence is Large ribosomal subunit protein uL10 (166 aa).

Belongs to the universal ribosomal protein uL10 family. As to quaternary structure, part of the ribosomal stalk of the 50S ribosomal subunit. The N-terminus interacts with L11 and the large rRNA to form the base of the stalk. The C-terminus forms an elongated spine to which L12 dimers bind in a sequential fashion forming a multimeric L10(L12)X complex.

Its function is as follows. Forms part of the ribosomal stalk, playing a central role in the interaction of the ribosome with GTP-bound translation factors. The protein is Large ribosomal subunit protein uL10 of Staphylococcus carnosus (strain TM300).